Reading from the N-terminus, the 88-residue chain is Small ribosomal subunit protein uS15 (88 aa).

Belongs to the universal ribosomal protein uS15 family. As to quaternary structure, part of the 30S ribosomal subunit. Forms a bridge to the 50S subunit in the 70S ribosome, contacting the 23S rRNA.

One of the primary rRNA binding proteins, it binds directly to 16S rRNA where it helps nucleate assembly of the platform of the 30S subunit by binding and bridging several RNA helices of the 16S rRNA. In terms of biological role, forms an intersubunit bridge (bridge B4) with the 23S rRNA of the 50S subunit in the ribosome. The sequence is that of Small ribosomal subunit protein uS15 from Francisella tularensis subsp. tularensis (strain FSC 198).